The chain runs to 85 residues: U4-theraphotoxin-Hhn1a (85 aa).

An N-terminal signal peptide occupies residues 1–22 (MKMTLIAILTCAAVLVLHTTAA). The propeptide occupies 23 to 48 (EELEAESQLMEVGMPDTELAAVDEER). 3 cysteine pairs are disulfide-bonded: Cys-52–Cys-66, Cys-56–Cys-77, and Cys-71–Cys-82.

This sequence belongs to the neurotoxin 12 (Hwtx-2) family. 02 (Hwtx-2) subfamily. In terms of assembly, monomer. As to expression, expressed by the venom gland.

The protein resides in the secreted. In terms of biological role, neurotoxin active on both insects and mammals. In Cyriopagopus hainanus (Chinese bird spider), this protein is U4-theraphotoxin-Hhn1a.